Consider the following 209-residue polypeptide: MHRQLRYAVLATALFASTAFAGARQELDTFTRGLKGLDGQFSQRVTDANGRVKENSSGRVALATPRQFRWEYAKPYKQLIVADGKKVWVFDPDLEQVTVRAQGSEEQNSPLVALIDPTRLDKQYDVSEEAAPRDGLQWLSLTPKVDTDASFQMASLGFGKDGLAKMEVVDAVGQRTAISFSGWKRNPAFAADTFRYTPGKGVDVVGDAQ.

A signal peptide spans 1–21 (MHRQLRYAVLATALFASTAFA).

Belongs to the LolA family. In terms of assembly, monomer.

Its subcellular location is the periplasm. Its function is as follows. Participates in the translocation of lipoproteins from the inner membrane to the outer membrane. Only forms a complex with a lipoprotein if the residue after the N-terminal Cys is not an aspartate (The Asp acts as a targeting signal to indicate that the lipoprotein should stay in the inner membrane). The sequence is that of Outer-membrane lipoprotein carrier protein from Xanthomonas campestris pv. campestris (strain 8004).